The chain runs to 256 residues: Imidazole glycerol phosphate synthase subunit HisF (256 aa).

Active-site residues include Asp12 and Asp131.

Belongs to the HisA/HisF family. In terms of assembly, heterodimer of HisH and HisF.

The protein resides in the cytoplasm. It carries out the reaction 5-[(5-phospho-1-deoxy-D-ribulos-1-ylimino)methylamino]-1-(5-phospho-beta-D-ribosyl)imidazole-4-carboxamide + L-glutamine = D-erythro-1-(imidazol-4-yl)glycerol 3-phosphate + 5-amino-1-(5-phospho-beta-D-ribosyl)imidazole-4-carboxamide + L-glutamate + H(+). It participates in amino-acid biosynthesis; L-histidine biosynthesis; L-histidine from 5-phospho-alpha-D-ribose 1-diphosphate: step 5/9. Its function is as follows. IGPS catalyzes the conversion of PRFAR and glutamine to IGP, AICAR and glutamate. The HisF subunit catalyzes the cyclization activity that produces IGP and AICAR from PRFAR using the ammonia provided by the HisH subunit. The chain is Imidazole glycerol phosphate synthase subunit HisF from Ectopseudomonas mendocina (strain ymp) (Pseudomonas mendocina).